We begin with the raw amino-acid sequence, 316 residues long: Transaldolase (316 aa).

K125 functions as the Schiff-base intermediate with substrate in the catalytic mechanism.

It belongs to the transaldolase family. Type 1 subfamily. As to quaternary structure, homodimer.

Its subcellular location is the cytoplasm. The catalysed reaction is D-sedoheptulose 7-phosphate + D-glyceraldehyde 3-phosphate = D-erythrose 4-phosphate + beta-D-fructose 6-phosphate. Its pathway is carbohydrate degradation; pentose phosphate pathway; D-glyceraldehyde 3-phosphate and beta-D-fructose 6-phosphate from D-ribose 5-phosphate and D-xylulose 5-phosphate (non-oxidative stage): step 2/3. Transaldolase is important for the balance of metabolites in the pentose-phosphate pathway. The protein is Transaldolase of Verminephrobacter eiseniae (strain EF01-2).